Reading from the N-terminus, the 346-residue chain is F(420)H(2) dehydrogenase subunit F (346 aa).

4Fe-4S ferredoxin-type domains follow at residues 5 to 34 and 46 to 76; these read IAEVIQHDVCAACGACEAVCPIGAVTVKKA and YEKGAAFQVCEGCLTCSRICPVVDGFIENEL. Positions 14, 17, 20, 24, 55, 58, 61, and 65 each coordinate [4Fe-4S] cluster.

The FPO complex is composed of at least 13 different subunits. The cofactor is [4Fe-4S] cluster. Requires FAD as cofactor.

It localises to the membrane. The protein localises to the cytoplasm. It catalyses the reaction methanophenazine + reduced coenzyme F420-(gamma-L-Glu)(n) = dihydromethanophenazine + oxidized coenzyme F420-(gamma-L-Glu)(n) + H(+). The enzyme catalyses reduced coenzyme F420-(gamma-L-Glu)(n) + 2 oxidized [2Fe-2S]-[ferredoxin] = oxidized coenzyme F420-(gamma-L-Glu)(n) + 2 reduced [2Fe-2S]-[ferredoxin] + 3 H(+). Component of the F(420)H(2) dehydrogenase (FPO complex) which is part of the energy-conserving F(420)H(2):heterodisulfide oxidoreductase system. The membrane-bound electron transfer system of the complex plays an important role in the metabolism of methylotrophic methanogens when the organisms grow on methanol or methylamines. Catalyzes the oxidation of methanophenazine to dihydromethanophenazine. It shuttles electrons from F(420)H(2), via FAD and iron-sulfur (Fe-S) centers, to methanophenazine (an electron carrier in the membrane). It couples the redox reaction to proton translocation (for every two electrons transferred, two hydrogen ions are translocated across the cytoplasmic membrane), and thus conserves the redox energy in a proton gradient. It also catalyzes the oxidation of F(420)H(2) with quinones such as 2,3-dimethyl-1,4-naphthoquinone, 2-methyl-1,4-naphthoquinone and tetramethyl-p-benzoquinone. Might have a dual function, acting as an electron input module when connected to the membrane integral Fpo complex, or as a soluble single subunit, being involved in the reoxydation of reduced ferredoxin in the cytoplasm. The polypeptide is F(420)H(2) dehydrogenase subunit F (fpoF) (Methanosarcina mazei (strain ATCC BAA-159 / DSM 3647 / Goe1 / Go1 / JCM 11833 / OCM 88) (Methanosarcina frisia)).